We begin with the raw amino-acid sequence, 141 residues long: uncharacterized protein (141 aa).

This is an uncharacterized protein from Saccharomyces cerevisiae (strain ATCC 204508 / S288c) (Baker's yeast).